The chain runs to 309 residues: tRNA pseudouridine synthase B (309 aa).

Residue D39 is the Nucleophile of the active site.

Belongs to the pseudouridine synthase TruB family. Type 1 subfamily.

The enzyme catalyses uridine(55) in tRNA = pseudouridine(55) in tRNA. Its function is as follows. Responsible for synthesis of pseudouridine from uracil-55 in the psi GC loop of transfer RNAs. The protein is tRNA pseudouridine synthase B of Bacillus pumilus (strain SAFR-032).